We begin with the raw amino-acid sequence, 239 residues long: Putative transcriptional regulator of 2-aminoethylphosphonate degradation operons (239 aa).

The 69-residue stretch at 8-76 (IPQYLLIKAQ…DRRGWFVTPE (69 aa)) folds into the HTH gntR-type domain. Residues 36-55 (ERELCAIFNTTRITIRESLA) constitute a DNA-binding region (H-T-H motif).

The protein is Putative transcriptional regulator of 2-aminoethylphosphonate degradation operons (phnR) of Salmonella typhi.